Consider the following 89-residue polypeptide: Small ribosomal subunit protein uS15 (89 aa).

It belongs to the universal ribosomal protein uS15 family. In terms of assembly, part of the 30S ribosomal subunit. Forms a bridge to the 50S subunit in the 70S ribosome, contacting the 23S rRNA.

Functionally, one of the primary rRNA binding proteins, it binds directly to 16S rRNA where it helps nucleate assembly of the platform of the 30S subunit by binding and bridging several RNA helices of the 16S rRNA. Forms an intersubunit bridge (bridge B4) with the 23S rRNA of the 50S subunit in the ribosome. In Klebsiella pneumoniae (strain 342), this protein is Small ribosomal subunit protein uS15.